Reading from the N-terminus, the 106-residue chain is Small ribosomal subunit protein uS10 (106 aa).

It belongs to the universal ribosomal protein uS10 family. Part of the 30S ribosomal subunit.

Involved in the binding of tRNA to the ribosomes. The sequence is that of Small ribosomal subunit protein uS10 from Hyphomonas neptunium (strain ATCC 15444).